A 404-amino-acid polypeptide reads, in one-letter code: MSPSDVPINWKRNLTVTWLGCFLTGAAFSLVMPFLPLYVEQLGVTGHSALNMWSGLVFSITFLFSAIASPFWGGLADRKGRKIMLLRSALGMAIVMLLMGMAQNIWQFLILRALLGLLGGFIPNANALIATQVPRHKSGWALGTLSTGGVSGALLGPLAGGLLADHYGLRPVFFITASVLFICFLLTFFFIRENFLPVSKKEMLHVREVVASLKNPRLVLSLFVTTLIIQVATGSIAPILTLYVRELAGNVSNIAFISGMIASVPGVAALLSAPRLGKLGDKIGPEKILIVALIISVLLLIPMSFVQTPWQLALLRFLLGAADGALLPAVQTLLVYNSTNQIAGRIFSYNQSFRDIGNVTGPLMGAAISASYGFRAVFCVTAGVVLFNAIYSWNSLRRRRLAIE.

The next 11 helical transmembrane spans lie at 19-39 (LGCF…PLYV), 56-76 (LVFS…GGLA), 90-110 (LGMA…QFLI), 113-133 (ALLG…ATQV), 144-164 (TLST…GLLA), 171-191 (PVFF…FFFI), 222-242 (LFVT…ILTL), 254-274 (IAFI…LSAP), 288-308 (ILIV…FVQT), 317-337 (FLLG…LVYN), and 376-396 (AVFC…WNSL).

This sequence belongs to the major facilitator superfamily. DHA1 family. MdtG (TC 2.A.1.2.20) subfamily.

It is found in the cell inner membrane. This chain is Multidrug resistance protein MdtG, found in Salmonella schwarzengrund (strain CVM19633).